We begin with the raw amino-acid sequence, 252 residues long: Thiazole synthase (252 aa).

The active-site Schiff-base intermediate with DXP is K95. 1-deoxy-D-xylulose 5-phosphate is bound by residues G156, 182 to 183 (AG), and 204 to 205 (NT).

The protein belongs to the ThiG family. Homotetramer. Forms heterodimers with either ThiH or ThiS.

Its subcellular location is the cytoplasm. It catalyses the reaction [ThiS sulfur-carrier protein]-C-terminal-Gly-aminoethanethioate + 2-iminoacetate + 1-deoxy-D-xylulose 5-phosphate = [ThiS sulfur-carrier protein]-C-terminal Gly-Gly + 2-[(2R,5Z)-2-carboxy-4-methylthiazol-5(2H)-ylidene]ethyl phosphate + 2 H2O + H(+). It participates in cofactor biosynthesis; thiamine diphosphate biosynthesis. Functionally, catalyzes the rearrangement of 1-deoxy-D-xylulose 5-phosphate (DXP) to produce the thiazole phosphate moiety of thiamine. Sulfur is provided by the thiocarboxylate moiety of the carrier protein ThiS. In vitro, sulfur can be provided by H(2)S. The chain is Thiazole synthase from Shewanella sp. (strain ANA-3).